The sequence spans 91 residues: MHPGGKGHCGPPPGHGPGHCHEGHHPPGPGGPHPGHGPGHCPGGHHPPGHGGPSHGHGPGHCPGGHHPPGHGGPSHGHGPGHCGPHPGPHH.

Residues 1–91 (MHPGGKGHCG…HCGPHPGPHH (91 aa)) are disordered. Composition is skewed to gly residues over residues 33–42 (HPGHGPGHCP), 49–63 (GHGGPSHGHGPGHCP), and 70–82 (GHGGPSHGHGPGH).

The protein is Proline, histidine and glycine-rich protein 1 (Phgr1) of Mus musculus (Mouse).